The chain runs to 573 residues: DNA ligase (573 aa).

Glu-250 contacts ATP. The active-site N6-AMP-lysine intermediate is the Lys-252. ATP is bound by residues Arg-257, Arg-272, Glu-301, Phe-342, Arg-432, and Lys-438.

The protein belongs to the ATP-dependent DNA ligase family. It depends on Mg(2+) as a cofactor.

It catalyses the reaction ATP + (deoxyribonucleotide)n-3'-hydroxyl + 5'-phospho-(deoxyribonucleotide)m = (deoxyribonucleotide)n+m + AMP + diphosphate.. Functionally, DNA ligase that seals nicks in double-stranded DNA during DNA replication, DNA recombination and DNA repair. In Methanococcus maripaludis (strain C5 / ATCC BAA-1333), this protein is DNA ligase.